The following is a 92-amino-acid chain: Antifungal protein B (92 aa).

The N-terminal stretch at 1 to 18 (MQITSIAIVFFAAMGAVA) is a signal peptide. Residues 19–34 (NPIARESDDLDARDVQ) constitute a propeptide that is removed on maturation. Cystine bridges form between C42–C70, C49–C77, and C62–C88.

It localises to the secreted. The protein localises to the host cytoplasm. Antifungal protein that acts as an inhibitor of growth of human pathogenic molds and yeasts. Is active against the model organism Neurospora crassa, the opportunistic human pathogens Aspergillus fumigatus, Trichophyton rubrum, and Aspergillus terreus. Provokes a reduction of the incidence of infections caused by Penicillium digitatum and Penicillium italicum in oranges and by Penicillium expansum in apples. Low doses of pafB have self-inhibition activity. Also shows activity against the model yeast Saccaromyces cerevisiae and the opportunistic human pathogen Candida albicans. No antibacterial activity is observed on the Gram-negative Escherichia coli and the Gram-positive Bacillus subtilis. Finally, also shows anti-viral activity in a model of HCoV 229E infected L132 cells. This chain is Antifungal protein B, found in Penicillium chrysogenum (Penicillium notatum).